Reading from the N-terminus, the 215-residue chain is Uracil-DNA glycosylase (215 aa).

The active-site Proton acceptor is the Asp59.

This sequence belongs to the uracil-DNA glycosylase (UDG) superfamily. UNG family.

The protein localises to the cytoplasm. The enzyme catalyses Hydrolyzes single-stranded DNA or mismatched double-stranded DNA and polynucleotides, releasing free uracil.. In terms of biological role, excises uracil residues from the DNA which can arise as a result of misincorporation of dUMP residues by DNA polymerase or due to deamination of cytosine. This Aliarcobacter butzleri (strain RM4018) (Arcobacter butzleri) protein is Uracil-DNA glycosylase.